A 542-amino-acid polypeptide reads, in one-letter code: Chondroitin sulfate N-acetylgalactosaminyltransferase 2 (542 aa).

Residues 1–11 (MPRRGLILHTR) are Cytoplasmic-facing. A helical; Signal-anchor for type II membrane protein membrane pass occupies residues 12 to 32 (THWLLLGLALLCSLVLFMYLL). Over 33–542 (ECAPQTDGNA…AYRTNSEAVG (510 aa)) the chain is Lumenal. N-linked (GlcNAc...) asparagine glycosylation is present at N41. The stretch at 59–105 (ALLQEQEEHYQTRATSLKRQIAQLKQELQEMSEKMRSLQERRNVGAN) forms a coiled coil. The N-linked (GlcNAc...) asparagine glycan is linked to N333. A divalent metal cation contacts are provided by D369 and H486.

It belongs to the chondroitin N-acetylgalactosaminyltransferase family. Ubiquitous.

The protein resides in the golgi apparatus. Its subcellular location is the golgi stack membrane. It catalyses the reaction 3-O-(beta-D-GlcA-(1-&gt;3)-beta-D-Gal-(1-&gt;3)-beta-D-Gal-(1-&gt;4)-beta-D-Xyl)-L-seryl-[protein] + UDP-N-acetyl-alpha-D-galactosamine = 3-O-(beta-D-GalNAc-(1-&gt;4)-beta-D-GlcA-(1-&gt;3)-beta-D-Gal-(1-&gt;3)-beta-D-Gal-(1-&gt;4)-beta-D-Xyl)-L-seryl-[protein] + UDP + H(+). Its function is as follows. Transfers 1,4-N-acetylgalactosamine (GalNAc) from UDP-GalNAc to the non-reducing end of glucuronic acid (GlcUA). Required for addition of the first GalNAc to the core tetrasaccharide linker and for elongation of chondroitin chains. The polypeptide is Chondroitin sulfate N-acetylgalactosaminyltransferase 2 (CSGALNACT2) (Homo sapiens (Human)).